We begin with the raw amino-acid sequence, 244 residues long: Inactive chemokine-binding protein (244 aa).

The tract at residues 1–79 (MHVPASLQQS…STSVEDVDPP (79 aa)) is disordered. Residues 37 to 53 (QDQTPTNDKICQSVTEI) are compositionally biased toward polar residues. Positions 54–77 (TESESDPDPEVESEDDSTSVEDVD) are enriched in acidic residues.

This sequence belongs to the orthopoxvirus OPG001 family.

Its subcellular location is the host cytoplasm. The protein is truncated in this vaccinal strain and presumably inactive, because the lack of signal peptide prevents the protein of being secreted. In the wild-type viruses inhibits host immune defense by binding to host chemokines. Binds host CC chemokines (beta chemokines) such as RANTES with high affinity, but not CXC or C chemokines (alpha and gamma chemokines). In Vaccinia virus (strain Western Reserve) (VACV), this protein is Inactive chemokine-binding protein (OPG001).